The following is a 145-amino-acid chain: Bacilliredoxin SSP1241 (145 aa).

Belongs to the bacilliredoxin family.

This Staphylococcus saprophyticus subsp. saprophyticus (strain ATCC 15305 / DSM 20229 / NCIMB 8711 / NCTC 7292 / S-41) protein is Bacilliredoxin SSP1241.